A 301-amino-acid chain; its full sequence is Diaminopimelate epimerase (301 aa).

Residues asparagine 15, glutamine 47, and asparagine 67 each coordinate substrate. Cysteine 76 (proton donor) is an active-site residue. Residues 77–78 (GN), asparagine 163, asparagine 197, and 215–216 (ER) contribute to the substrate site. Catalysis depends on cysteine 224, which acts as the Proton acceptor. 225 to 226 (GS) contacts substrate.

It belongs to the diaminopimelate epimerase family. As to quaternary structure, homodimer.

The protein localises to the cytoplasm. It carries out the reaction (2S,6S)-2,6-diaminopimelate = meso-2,6-diaminopimelate. It participates in amino-acid biosynthesis; L-lysine biosynthesis via DAP pathway; DL-2,6-diaminopimelate from LL-2,6-diaminopimelate: step 1/1. Catalyzes the stereoinversion of LL-2,6-diaminopimelate (L,L-DAP) to meso-diaminopimelate (meso-DAP), a precursor of L-lysine and an essential component of the bacterial peptidoglycan. The polypeptide is Diaminopimelate epimerase (Rhizobium meliloti (strain 1021) (Ensifer meliloti)).